Reading from the N-terminus, the 90-residue chain is Probable acyl carrier protein (90 aa).

In terms of domain architecture, Carrier spans 9–90; the sequence is QVTVEELSAL…LVNGALKTGV (82 aa). S47 is modified (O-(pantetheine 4'-phosphoryl)serine).

In terms of processing, 4'-phosphopantetheine is transferred from CoA to a specific serine of the apo-ACP-like protein.

Its function is as follows. Involved in developmentally regulated synthesis of a compound biosynthetically related to polyketide antibiotics which is essential for spore color in Streptomyces coelicolor. In Streptomyces coelicolor (strain ATCC BAA-471 / A3(2) / M145), this protein is Probable acyl carrier protein.